We begin with the raw amino-acid sequence, 464 residues long: Kynureninase (464 aa).

Position 1 is an N-acetylmethionine (M1). Pyridoxal 5'-phosphate-binding positions include L137, T138, 165 to 168 (FPSD), S221, D250, H253, and Y275. Residue K276 is modified to N6-(pyridoxal phosphate)lysine. Pyridoxal 5'-phosphate-binding residues include W305 and N333.

Belongs to the kynureninase family. Homodimer. The cofactor is pyridoxal 5'-phosphate.

It localises to the cytoplasm. Its subcellular location is the cytosol. It carries out the reaction L-kynurenine + H2O = anthranilate + L-alanine + H(+). It catalyses the reaction 3-hydroxy-L-kynurenine + H2O = 3-hydroxyanthranilate + L-alanine + H(+). It functions in the pathway amino-acid degradation; L-kynurenine degradation; L-alanine and anthranilate from L-kynurenine: step 1/1. Its pathway is cofactor biosynthesis; NAD(+) biosynthesis; quinolinate from L-kynurenine: step 2/3. Catalyzes the cleavage of L-kynurenine (L-Kyn) and L-3-hydroxykynurenine (L-3OHKyn) into anthranilic acid (AA) and 3-hydroxyanthranilic acid (3-OHAA), respectively. Has a preference for the L-3-hydroxy form. Also has cysteine-conjugate-beta-lyase activity. The sequence is that of Kynureninase (Kynu) from Mus musculus (Mouse).